We begin with the raw amino-acid sequence, 354 residues long: Dye-decolorizing peroxidase (354 aa).

The active-site Proton acceptor is Asp165. His238 contributes to the heme binding site. The tract at residues 312–335 is targeting peptide; the sequence is GLFFSPTVDFLDDPPPLPAPGTPA. Over residues 324–337 the composition is skewed to pro residues; the sequence is DPPPLPAPGTPAAP. Residues 324 to 354 are disordered; sequence DPPPLPAPGTPAAPPARNGSLSIGSLKGTTR. Residues 342 to 354 are compositionally biased toward polar residues; that stretch reads GSLSIGSLKGTTR.

The protein belongs to the DyP-type peroxidase family. As to quaternary structure, found in a complex with type 1 encapsulin, strongly suggesting it is found in a type 1 encapsulin nanocompartment. Homotetramer, presumably also in the type 1 encapsulin nanocompartment. Heme b serves as cofactor.

Its subcellular location is the encapsulin nanocompartment. The protein localises to the cell membrane. The catalysed reaction is 2 a phenolic donor + H2O2 = 2 a phenolic radical donor + 2 H2O. Functionally, cargo protein of a type 1 encapsulin nanocompartment. A heme-dependent peroxidase. This cargo-loaded encapsulin nanocompartment is probably involved in protection against oxidative damage. The sequence is that of Dye-decolorizing peroxidase from Mycolicibacterium paratuberculosis (strain ATCC BAA-968 / K-10) (Mycobacterium paratuberculosis).